The sequence spans 393 residues: Small RNA 2'-O-methyltransferase (393 aa).

S-adenosyl-L-methionine-binding residues include Tyr36, Gly55, Asp78, Lys83, Val115, and Ile131. Mg(2+) is bound by residues Glu132, Glu135, His136, and His181. The segment at 286–307 is disordered; the sequence is HLPRRKEQAGERGDKPKDIGGS. Residues 290–305 are compositionally biased toward basic and acidic residues; that stretch reads RKEQAGERGDKPKDIG.

It belongs to the methyltransferase superfamily. HEN1 family. The cofactor is Mg(2+).

The protein resides in the cytoplasm. It carries out the reaction small RNA 3'-end nucleotide + S-adenosyl-L-methionine = small RNA 3'-end 2'-O-methylnucleotide + S-adenosyl-L-homocysteine + H(+). In terms of biological role, methyltransferase that adds a 2'-O-methyl group at the 3'-end of piRNAs, a class of 24 to 30 nucleotide RNAs that are generated by a Dicer-independent mechanism and are primarily derived from transposons and other repeated sequence elements. This probably protects the 3'-end of piRNAs from uridylation activity and subsequent degradation. Stabilization of piRNAs is essential for gametogenesis. This Homo sapiens (Human) protein is Small RNA 2'-O-methyltransferase (HENMT1).